Here is a 153-residue protein sequence, read N- to C-terminus: Interleukin-4 (153 aa).

An N-terminal signal peptide occupies residues 1–24 (MGLTSQLLPPLFFLLACAGNFAHG). 3 cysteine pairs are disulfide-bonded: cysteine 27/cysteine 151, cysteine 48/cysteine 89, and cysteine 70/cysteine 123. N-linked (GlcNAc...) asparagine glycosylation is present at asparagine 62.

The protein belongs to the IL-4/IL-13 family.

It localises to the secreted. Its function is as follows. Participates in at least several B-cell activation processes as well as of other cell types. It is a costimulator of DNA-synthesis. It induces the expression of class II MHC molecules on resting B-cells. It enhances both secretion and cell surface expression of IgE and IgG1. It also regulates the expression of the low affinity Fc receptor for IgE (CD23) on both lymphocytes and monocytes. Positively regulates IL31RA expression in macrophages. Stimulates autophagy in dendritic cells by interfering with mTORC1 signaling and through the induction of RUFY4. In Papio anubis (Olive baboon), this protein is Interleukin-4 (IL4).